We begin with the raw amino-acid sequence, 154 residues long: Small ribosomal subunit protein bS6 (154 aa).

Residues 94–154 (VKQEGPLPTP…SSQGKESQKS (61 aa)) are disordered. Polar residues predominate over residues 103–112 (PRSSNKGYNQ). Residues 113-139 (SEKKDIESIDSTNKSEFKEEANDKKTA) are compositionally biased toward basic and acidic residues. The span at 140-154 (TSESTSSQGKESQKS) shows a compositional bias: polar residues.

This sequence belongs to the bacterial ribosomal protein bS6 family.

Its function is as follows. Binds together with bS18 to 16S ribosomal RNA. This Prochlorococcus marinus subsp. pastoris (strain CCMP1986 / NIES-2087 / MED4) protein is Small ribosomal subunit protein bS6.